A 244-amino-acid polypeptide reads, in one-letter code: 5-oxoprolinase subunit A (244 aa).

Belongs to the LamB/PxpA family. As to quaternary structure, forms a complex composed of PxpA, PxpB and PxpC.

It catalyses the reaction 5-oxo-L-proline + ATP + 2 H2O = L-glutamate + ADP + phosphate + H(+). In terms of biological role, catalyzes the cleavage of 5-oxoproline to form L-glutamate coupled to the hydrolysis of ATP to ADP and inorganic phosphate. The protein is 5-oxoprolinase subunit A of Salmonella newport (strain SL254).